Reading from the N-terminus, the 151-residue chain is Large ribosomal subunit protein bL9 (151 aa).

Belongs to the bacterial ribosomal protein bL9 family.

Binds to the 23S rRNA. This chain is Large ribosomal subunit protein bL9, found in Kosmotoga olearia (strain ATCC BAA-1733 / DSM 21960 / TBF 19.5.1).